A 229-amino-acid polypeptide reads, in one-letter code: Peroxiredoxin 1 (229 aa).

In terms of domain architecture, Thioredoxin spans 33–192 (LGPKNKAPDF…AFRTLKAFQF (160 aa)). Catalysis depends on cysteine 78, which acts as the Cysteine sulfenic acid (-SOH) intermediate.

The protein belongs to the peroxiredoxin family. AhpC/Prx1 subfamily. As to quaternary structure, homodimer; disulfide-linked, upon oxidation.

The enzyme catalyses a hydroperoxide + [thioredoxin]-dithiol = an alcohol + [thioredoxin]-disulfide + H2O. In terms of biological role, thiol-specific peroxidase that catalyzes the reduction of hydrogen peroxide and organic hydroperoxides to water and alcohols, respectively. Plays a role in cell protection against oxidative stress by detoxifying peroxides and as sensor of hydrogen peroxide-mediated signaling events. The sequence is that of Peroxiredoxin 1 (TSA1) from Brugia malayi (Filarial nematode worm).